The following is a 252-amino-acid chain: 5'-nucleotidase SurE (252 aa).

A divalent metal cation-binding residues include Asp8, Asp9, Ser40, and Asn92.

The protein belongs to the SurE nucleotidase family. The cofactor is a divalent metal cation.

The protein resides in the cytoplasm. It carries out the reaction a ribonucleoside 5'-phosphate + H2O = a ribonucleoside + phosphate. Its function is as follows. Nucleotidase that shows phosphatase activity on nucleoside 5'-monophosphates. The protein is 5'-nucleotidase SurE of Mesorhizobium japonicum (strain LMG 29417 / CECT 9101 / MAFF 303099) (Mesorhizobium loti (strain MAFF 303099)).